We begin with the raw amino-acid sequence, 213 residues long: Pyridoxine/pyridoxamine 5'-phosphate oxidase (213 aa).

Residues 60–65 (RMVLMK), 75–76 (YS), K82, and Q104 each bind FMN. K65 contributes to the substrate binding site. Residues Y122 and R126 each contribute to the substrate site. Residues 139 to 140 (QS) and W184 contribute to the FMN site. 190 to 192 (RLH) is a binding site for substrate. R194 is a binding site for FMN.

It belongs to the pyridoxamine 5'-phosphate oxidase family. As to quaternary structure, homodimer. FMN is required as a cofactor.

It catalyses the reaction pyridoxamine 5'-phosphate + O2 + H2O = pyridoxal 5'-phosphate + H2O2 + NH4(+). The enzyme catalyses pyridoxine 5'-phosphate + O2 = pyridoxal 5'-phosphate + H2O2. The protein operates within cofactor metabolism; pyridoxal 5'-phosphate salvage; pyridoxal 5'-phosphate from pyridoxamine 5'-phosphate: step 1/1. It participates in cofactor metabolism; pyridoxal 5'-phosphate salvage; pyridoxal 5'-phosphate from pyridoxine 5'-phosphate: step 1/1. In terms of biological role, catalyzes the oxidation of either pyridoxine 5'-phosphate (PNP) or pyridoxamine 5'-phosphate (PMP) into pyridoxal 5'-phosphate (PLP). The polypeptide is Pyridoxine/pyridoxamine 5'-phosphate oxidase (Nitrobacter winogradskyi (strain ATCC 25391 / DSM 10237 / CIP 104748 / NCIMB 11846 / Nb-255)).